A 328-amino-acid chain; its full sequence is Malate dehydrogenase (328 aa).

11–17 is an NAD(+) binding site; that stretch reads GAAGQIG. Positions 94 and 100 each coordinate substrate. Residues Asn107, Gln114, and 131–133 each bind NAD(+); that span reads VGN. Substrate is bound by residues Asn133 and Arg164. The Proton acceptor role is filled by His189.

The protein belongs to the LDH/MDH superfamily. MDH type 2 family.

The enzyme catalyses (S)-malate + NAD(+) = oxaloacetate + NADH + H(+). Its function is as follows. Catalyzes the reversible oxidation of malate to oxaloacetate. The protein is Malate dehydrogenase of Xylella fastidiosa (strain M12).